The sequence spans 253 residues: N-acetylmuramoyl-L-alanine amidase CwlM (253 aa).

A MurNAc-LAA domain is found at 4–172; it reads IFIDPGHGGS…IARGHANGLA (169 aa). The SPOR domain occupies 179–253; that stretch reads KNAAALYKVQ…AEFDTFIYQE (75 aa). A run of 2 repeats spans residues 184–219 and 220–253. The 2 X 35 AA approximate tandem repeats stretch occupies residues 184–253; it reads LYKVQIAAFR…AEFDTFIYQE (70 aa).

This sequence belongs to the N-acetylmuramoyl-L-alanine amidase 3 family.

It is found in the secreted. The enzyme catalyses Hydrolyzes the link between N-acetylmuramoyl residues and L-amino acid residues in certain cell-wall glycopeptides.. In terms of biological role, hydrolyzes the cell wall of M.luteus more efficiently than that of B.licheniformis and B.subtilis. The C-terminal region, including the repeats, determines substrate specificity. The polypeptide is N-acetylmuramoyl-L-alanine amidase CwlM (cwlM) (Bacillus licheniformis).